Reading from the N-terminus, the 463-residue chain is Exodeoxyribonuclease 7 large subunit (463 aa).

This sequence belongs to the XseA family. As to quaternary structure, heterooligomer composed of large and small subunits.

Its subcellular location is the cytoplasm. It catalyses the reaction Exonucleolytic cleavage in either 5'- to 3'- or 3'- to 5'-direction to yield nucleoside 5'-phosphates.. In terms of biological role, bidirectionally degrades single-stranded DNA into large acid-insoluble oligonucleotides, which are then degraded further into small acid-soluble oligonucleotides. The sequence is that of Exodeoxyribonuclease 7 large subunit from Pseudomonas syringae pv. syringae (strain B728a).